Consider the following 75-residue polypeptide: MLVLKRKQGEAIHIGDDVTLTVLAIEGDQVKLGIDAPRHIDIHRHEVYIQMQEENESARNSANLMKQMIQKQSEA.

Belongs to the CsrA/RsmA family. As to quaternary structure, homodimer; the beta-strands of each monomer intercalate to form a hydrophobic core, while the alpha-helices form wings that extend away from the core.

The protein resides in the cytoplasm. In terms of biological role, a translational regulator that binds mRNA to regulate translation initiation and/or mRNA stability. Usually binds in the 5'-UTR at or near the Shine-Dalgarno sequence preventing ribosome-binding, thus repressing translation. Its main target seems to be the major flagellin gene, while its function is anatagonized by FliW. This Exiguobacterium sp. (strain ATCC BAA-1283 / AT1b) protein is Translational regulator CsrA.